Here is a 197-residue protein sequence, read N- to C-terminus: Protein GrpE (197 aa).

A disordered region spans residues 1–41; that stretch reads MSSKEQKTPEGQAPEEIITEQHEEVEAVEPDASAEQVDPRD.

The protein belongs to the GrpE family. As to quaternary structure, homodimer.

It localises to the cytoplasm. Participates actively in the response to hyperosmotic and heat shock by preventing the aggregation of stress-denatured proteins, in association with DnaK and GrpE. It is the nucleotide exchange factor for DnaK and may function as a thermosensor. Unfolded proteins bind initially to DnaJ; upon interaction with the DnaJ-bound protein, DnaK hydrolyzes its bound ATP, resulting in the formation of a stable complex. GrpE releases ADP from DnaK; ATP binding to DnaK triggers the release of the substrate protein, thus completing the reaction cycle. Several rounds of ATP-dependent interactions between DnaJ, DnaK and GrpE are required for fully efficient folding. The sequence is that of Protein GrpE from Enterobacter sp. (strain 638).